Consider the following 501-residue polypeptide: Glycerol kinase (501 aa).

Threonine 14 is a binding site for ADP. ATP is bound by residues threonine 14, threonine 15, and serine 16. Position 14 (threonine 14) interacts with sn-glycerol 3-phosphate. An ADP-binding site is contributed by arginine 18. Arginine 84, glutamate 85, tyrosine 136, and aspartate 246 together coordinate sn-glycerol 3-phosphate. 5 residues coordinate glycerol: arginine 84, glutamate 85, tyrosine 136, aspartate 246, and glutamine 247. ADP is bound by residues threonine 268 and glycine 311. ATP contacts are provided by threonine 268, glycine 311, glutamine 315, and glycine 412. Residues glycine 412 and asparagine 416 each contribute to the ADP site.

This sequence belongs to the FGGY kinase family. Homotetramer and homodimer (in equilibrium).

The catalysed reaction is glycerol + ATP = sn-glycerol 3-phosphate + ADP + H(+). It participates in polyol metabolism; glycerol degradation via glycerol kinase pathway; sn-glycerol 3-phosphate from glycerol: step 1/1. Activated by phosphorylation and inhibited by fructose 1,6-bisphosphate (FBP). In terms of biological role, key enzyme in the regulation of glycerol uptake and metabolism. Catalyzes the phosphorylation of glycerol to yield sn-glycerol 3-phosphate. The sequence is that of Glycerol kinase from Desulforamulus reducens (strain ATCC BAA-1160 / DSM 100696 / MI-1) (Desulfotomaculum reducens).